A 1405-amino-acid polypeptide reads, in one-letter code: DNA-directed RNA polymerase subunit beta' (1405 aa).

Zn(2+) is bound by residues Cys-70, Cys-72, Cys-85, and Cys-88. Asp-458, Asp-460, and Asp-462 together coordinate Mg(2+). Cys-813, Cys-887, Cys-894, and Cys-897 together coordinate Zn(2+).

Belongs to the RNA polymerase beta' chain family. In terms of assembly, the RNAP catalytic core consists of 2 alpha, 1 beta, 1 beta' and 1 omega subunit. When a sigma factor is associated with the core the holoenzyme is formed, which can initiate transcription. Requires Mg(2+) as cofactor. Zn(2+) serves as cofactor.

The catalysed reaction is RNA(n) + a ribonucleoside 5'-triphosphate = RNA(n+1) + diphosphate. Its function is as follows. DNA-dependent RNA polymerase catalyzes the transcription of DNA into RNA using the four ribonucleoside triphosphates as substrates. In Albidiferax ferrireducens (strain ATCC BAA-621 / DSM 15236 / T118) (Rhodoferax ferrireducens), this protein is DNA-directed RNA polymerase subunit beta'.